The sequence spans 458 residues: Sulfite exporter TauE/SafE family protein 2 (458 aa).

The next 12 helical transmembrane spans lie at 5–25 (FVPI…EQEP), 53–73 (IELT…SSIS), 74–94 (SAGG…VAGL), 101–121 (SFSA…NLFV), 128–148 (GKTL…LLGV), 150–170 (IGVI…FAVF), 227–247 (FPWI…AVYL), 267–287 (YWLI…WICF), 324–344 (VMAL…GMLI), 348–368 (LLQV…MVLF), 386–406 (GTAS…LKVV), and 418–438 (IIVF…TSYG).

Belongs to the 4-toluene sulfonate uptake permease (TSUP) (TC 2.A.102) family.

It localises to the membrane. The protein is Sulfite exporter TauE/SafE family protein 2 of Arabidopsis thaliana (Mouse-ear cress).